The following is a 778-amino-acid chain: Lon protease (778 aa).

In terms of domain architecture, Lon N-terminal spans 6-207 (LPLMALRDMV…TVISMLNSNI (202 aa)). Residue 356–363 (GPPGVGKT) participates in ATP binding. A Lon proteolytic domain is found at 592–773 (EDQIGSTTGL…DQVLKHALVG (182 aa)). Active-site residues include serine 679 and lysine 722.

This sequence belongs to the peptidase S16 family. In terms of assembly, homohexamer. Organized in a ring with a central cavity.

Its subcellular location is the cytoplasm. It carries out the reaction Hydrolysis of proteins in presence of ATP.. Functionally, ATP-dependent serine protease that mediates the selective degradation of mutant and abnormal proteins as well as certain short-lived regulatory proteins. Required for cellular homeostasis and for survival from DNA damage and developmental changes induced by stress. Degrades polypeptides processively to yield small peptide fragments that are 5 to 10 amino acids long. Binds to DNA in a double-stranded, site-specific manner. This Rickettsia conorii (strain ATCC VR-613 / Malish 7) protein is Lon protease.